We begin with the raw amino-acid sequence, 168 residues long: uncharacterized protein (168 aa).

The chain crosses the membrane as a helical span at residues 36 to 56 (LNWWQLIVVVGIAISGIAAIA). N-linked (GlcNAc...) asparagine; by host glycosylation is present at Asn74. 3 helical membrane-spanning segments follow: residues 86–106 (FIIIIVLSCLAVVGGIILAWL), 115–135 (KLLTMGLTTGGILGILYALTI), and 143–163 (MVKLGISWVSLLAFVLLGFFI). Asn164 is a glycosylation site (N-linked (GlcNAc...) asparagine; by host).

It localises to the membrane. This is an uncharacterized protein from Acanthamoeba polyphaga mimivirus (APMV).